We begin with the raw amino-acid sequence, 813 residues long: MDAAALERDAVQFARLAVQRDHEGRYSGAVFYYKEAAQALIYAEMAGSSLEHIQEKINEYLERVQALHSAVQSKSADPLKSKHQLDLERAHLLVTQAFDEDEKGNVEDAIELYTEAVDLCLKTSYETADKTLQNKLKQLARQALDRAEALSEPLTKPLCKVKATNIKPKPPPTRTHFPLGTNPFQEGPQPFISPQSCDAQGQRYTAEEIEVLRTTSKINGIEYVPFMNIDLRERFAYPMPFCDRCGKLPLSPKQKAMFSKWVRPEDLTNNPTMIYTVSSFSIKQTIVSDCSFVASLAISAAYERRFTKKLITSIIYPQNKDGESEYNPCGKYMVKLHLNGVPRKVIIDDQLPVDHKGELLCSYSNNKSELWVSLIEKAYMKVMGGYDFPGSNSNIDLHALTGWIPERIAMHSDSQTFSKDNSFRMLYQRFHKGDVLITASTGVMTEAEGEKWGLVPTHAYAVLDIREFKGLRFIQLKNPWSHLRWKGRYSENDVKNWTPELQKYLNFDPRTPQKIDNGIFWISWDDLCQYYDVIYLSWNPGLLKESTCIHSTWDAKQGPVKDAYSLANNPQYKLEVQCPQGGAAVWVLLSRHITDKDDFANNREFITMVVYKTDGKKVYYPADPPPYIDGIRINSPHYLTKIKLTTPGTHTFTLVVSQYEKQNTIHYTVRVYSACSFTFSKIPSPYTVSKQINGKWSGQSAGGCGNFQETHKNNPIYQFHIEKSGPLLIELRGPRQYSVGFEVVTVSVVGDPGPHGFQRKSSGDYRCGFCYLELESIPAGIYNIIPSTFLPKQEGPFFLDFNSVIPIKTTQLQ.

Position 1 is an N-acetylmethionine (M1). Residue T95 is modified to Phosphothreonine. Positions 232–540 (RERFAYPMPF…YDVIYLSWNP (309 aa)) constitute a Calpain catalytic domain. Active-site residues include C290, H458, and N478. Residues 541–701 (GLLKESTCIH…INGKWSGQSA (161 aa)) form a domain III region. A domain N region spans residues 702-813 (GGCGNFQETH…VIPIKTTQLQ (112 aa)).

It belongs to the peptidase C2 family.

Its subcellular location is the nucleus. Calcium-regulated non-lysosomal thiol-protease. The protein is Calpain-7 (CAPN7) of Sus scrofa (Pig).